Here is a 79-residue protein sequence, read N- to C-terminus: Translation initiation factor IF-1, chloroplastic (79 aa).

One can recognise an S1-like domain in the interval 1-74; that stretch reads MTRKNIDLIE…HRGRITFRLR (74 aa).

This sequence belongs to the IF-1 family. In terms of assembly, component of the 30S ribosomal translation pre-initiation complex which assembles on the 30S ribosome in the order IF-2 and IF-3, IF-1 and N-formylmethionyl-tRNA(fMet); mRNA recruitment can occur at any time during PIC assembly.

It is found in the plastid. It localises to the chloroplast. One of the essential components for the initiation of protein synthesis. Stabilizes the binding of IF-2 and IF-3 on the 30S subunit to which N-formylmethionyl-tRNA(fMet) subsequently binds. Helps modulate mRNA selection, yielding the 30S pre-initiation complex (PIC). Upon addition of the 50S ribosomal subunit IF-1, IF-2 and IF-3 are released leaving the mature 70S translation initiation complex. The protein is Translation initiation factor IF-1, chloroplastic of Chlorella vulgaris (Green alga).